The sequence spans 901 residues: Aconitate hydratase A (901 aa).

[4Fe-4S] cluster-binding residues include Cys443, Cys509, and Cys512.

The protein belongs to the aconitase/IPM isomerase family. In terms of assembly, monomer. The cofactor is [4Fe-4S] cluster.

The enzyme catalyses citrate = D-threo-isocitrate. The catalysed reaction is (2S,3R)-3-hydroxybutane-1,2,3-tricarboxylate = 2-methyl-cis-aconitate + H2O. It functions in the pathway carbohydrate metabolism; tricarboxylic acid cycle; isocitrate from oxaloacetate: step 2/2. Its pathway is organic acid metabolism; propanoate degradation. Involved in the catabolism of short chain fatty acids (SCFA) via the tricarboxylic acid (TCA)(acetyl degradation route) and probably the 2-methylcitrate cycle I (propionate degradation route). Catalyzes the reversible isomerization of citrate to isocitrate via cis-aconitate. Could catalyze the hydration of 2-methyl-cis-aconitate to yield (2R,3S)-2-methylisocitrate. The apo form of AcnA functions as a RNA-binding regulatory protein. The sequence is that of Aconitate hydratase A (acnA) from Staphylococcus aureus (strain COL).